The following is a 118-amino-acid chain: D-dopachrome decarboxylase (118 aa).

Residue Pro-2 is modified to N-acetylproline. At Lys-33 the chain carries N6-acetyllysine. At Ser-90 the chain carries Phosphoserine.

This sequence belongs to the MIF family. Homotrimer.

It localises to the cytoplasm. The catalysed reaction is D-dopachrome + H(+) = 5,6-dihydroxyindole + CO2. Its function is as follows. Tautomerization of D-dopachrome with decarboxylation to give 5,6-dihydroxyindole (DHI). This chain is D-dopachrome decarboxylase (Ddt), found in Mus musculus (Mouse).